The chain runs to 350 residues: Renin receptor (350 aa).

Positions 1-17 (MAVLVVLLFFLVAGALG) are cleaved as a signal peptide. The Extracellular portion of the chain corresponds to 18-302 (NEFSILRSPG…YNLAYKYNLE (285 aa)). The chain crosses the membrane as a helical span at residues 303–323 (YSVVFNLVLWIMIGLALAVII). Residues 324 to 350 (TSYNIWNMDPGYDSIIYRMTNQKIRID) lie on the Cytoplasmic side of the membrane. The Mediates retrograde transport to the ER signature appears at 346 to 350 (KIRID).

Interacts with renin. Accessory component of the multisubunit proton-transporting vacuolar (V)-ATPase protein pump. Interacts (via N-terminus) with ATP6AP1 (via N-terminus). Interacts with ATP6V0D1; ATP6V0D1 is a V-ATPase complex subunit and the interaction promotes V-ATPase complex assembly. Interacts with TMEM9; TMEM9 is a V-ATPase assembly regulator and the interaction induces the interaction with ATP6V0D1. Interacts with VMA21 (via N-terminus); VMA21 is a V-ATPase accessory component. Post-translationally, phosphorylated. Proteolytically cleaved by a furin-like convertase in the trans-Golgi network to generate N- and C-terminal fragments. Expressed in glutamatergic and GABAergic neurons with highest levels in the cortex, the hippocampus, the medial habenular nucleus, the cerebellum, the medulla and the olfactory bulb (at protein level).

The protein localises to the endoplasmic reticulum membrane. It is found in the lysosome membrane. Its subcellular location is the cytoplasmic vesicle. It localises to the autophagosome membrane. The protein resides in the cell projection. The protein localises to the dendritic spine membrane. It is found in the axon. Its subcellular location is the endosome membrane. It localises to the clathrin-coated vesicle membrane. The protein resides in the secretory vesicle. The protein localises to the synaptic vesicle membrane. Multifunctional protein which functions as a renin, prorenin cellular receptor and is involved in the assembly of the lysosomal proton-transporting V-type ATPase (V-ATPase) and the acidification of the endo-lysosomal system. May mediate renin-dependent cellular responses by activating ERK1 and ERK2. By increasing the catalytic efficiency of renin in AGT/angiotensinogen conversion to angiotensin I, may also play a role in the renin-angiotensin system (RAS). Through its function in V-type ATPase (v-ATPase) assembly and acidification of the lysosome it regulates protein degradation and may control different signaling pathways important for proper brain development, synapse morphology and synaptic transmission. This is Renin receptor from Mus musculus (Mouse).